Consider the following 167-residue polypeptide: Small ribosomal subunit protein uS5 (167 aa).

Residues 12–75 (LEDNVVAINR…EAARKNLIEV (64 aa)) enclose the S5 DRBM domain.

Belongs to the universal ribosomal protein uS5 family. As to quaternary structure, part of the 30S ribosomal subunit. Contacts proteins S4 and S8.

Functionally, with S4 and S12 plays an important role in translational accuracy. In terms of biological role, located at the back of the 30S subunit body where it stabilizes the conformation of the head with respect to the body. The protein is Small ribosomal subunit protein uS5 of Levilactobacillus brevis (strain ATCC 367 / BCRC 12310 / CIP 105137 / JCM 1170 / LMG 11437 / NCIMB 947 / NCTC 947) (Lactobacillus brevis).